The chain runs to 585 residues: Phosphomethylpyrimidine synthase (585 aa).

Residues 89-107 (RGDTESYEGRHVKPEDNGY) show a composition bias toward basic and acidic residues. Residues 89 to 116 (RGDTESYEGRHVKPEDNGYRSRNGSHQH) are disordered. Substrate is bound by residues N199, M228, Y257, H293, 313–315 (SRG), 354–357 (DGLR), and E393. Position 397 (H397) interacts with Zn(2+). Y420 serves as a coordination point for substrate. Position 461 (H461) interacts with Zn(2+). [4Fe-4S] cluster is bound by residues C541, C544, and C549.

This sequence belongs to the ThiC family. [4Fe-4S] cluster is required as a cofactor.

The catalysed reaction is 5-amino-1-(5-phospho-beta-D-ribosyl)imidazole + S-adenosyl-L-methionine = 4-amino-2-methyl-5-(phosphooxymethyl)pyrimidine + CO + 5'-deoxyadenosine + formate + L-methionine + 3 H(+). It participates in cofactor biosynthesis; thiamine diphosphate biosynthesis. Its function is as follows. Catalyzes the synthesis of the hydroxymethylpyrimidine phosphate (HMP-P) moiety of thiamine from aminoimidazole ribotide (AIR) in a radical S-adenosyl-L-methionine (SAM)-dependent reaction. This chain is Phosphomethylpyrimidine synthase, found in Bacillus pumilus (strain SAFR-032).